Here is a 127-residue protein sequence, read N- to C-terminus: MORF4 family-associated protein 1 (127 aa).

Positions 92-126 (RAAKRCEKAEEKAKEIAKMAEMLVELVRRIEKSES) form a coiled coil.

It belongs to the MORF4 family-associated protein family. Found in a complex composed of MORF4L1, MRFAP1 and RB1. Interacts via its N-terminus with MORF4L1. Interacts with CSTB and MORF4L2.

The protein resides in the nucleus. The protein localises to the cytoplasm. It is found in the perinuclear region. This Homo sapiens (Human) protein is MORF4 family-associated protein 1.